The sequence spans 212 residues: Cytidylate kinase (212 aa).

Residue 7-15 (GPAASGKGT) coordinates ATP.

The protein belongs to the cytidylate kinase family. Type 1 subfamily.

It localises to the cytoplasm. The catalysed reaction is CMP + ATP = CDP + ADP. It carries out the reaction dCMP + ATP = dCDP + ADP. This Rhodopseudomonas palustris (strain BisB18) protein is Cytidylate kinase.